A 216-amino-acid chain; its full sequence is Adenylate kinase (216 aa).

10 to 15 (GAGKGT) contributes to the ATP binding site. Residues 30 to 59 (STGDMFRAAMKAETEMGLQAKSFIDKGALV) form an NMP region. AMP is bound by residues threonine 31, arginine 36, 57–59 (ALV), 85–88 (GFPR), and glutamine 92. Residues 126 to 163 (GRRICKECGATYHLEFNPPAKADVCDKCGGELYQRSDD) form an LID region. Residue arginine 127 participates in ATP binding. Zn(2+) contacts are provided by cysteine 130 and cysteine 133. 136–137 (TY) contributes to the ATP binding site. The Zn(2+) site is built by cysteine 150 and cysteine 153. 2 residues coordinate AMP: arginine 160 and arginine 171. Glutamine 199 contributes to the ATP binding site.

The protein belongs to the adenylate kinase family. Monomer.

The protein resides in the cytoplasm. The catalysed reaction is AMP + ATP = 2 ADP. The protein operates within purine metabolism; AMP biosynthesis via salvage pathway; AMP from ADP: step 1/1. Catalyzes the reversible transfer of the terminal phosphate group between ATP and AMP. Plays an important role in cellular energy homeostasis and in adenine nucleotide metabolism. The sequence is that of Adenylate kinase from Bacillus cereus (strain ATCC 10987 / NRS 248).